The sequence spans 412 residues: Peptide chain release factor subunit 1 (412 aa).

This sequence belongs to the eukaryotic release factor 1 family. In terms of assembly, heterodimer of two subunits, one of which binds GTP.

It is found in the cytoplasm. Functionally, directs the termination of nascent peptide synthesis (translation) in response to the termination codons UAA, UAG and UGA. This chain is Peptide chain release factor subunit 1, found in Methanobrevibacter smithii (strain ATCC 35061 / DSM 861 / OCM 144 / PS).